The sequence spans 1297 residues: Phosphoribosylformylglycinamidine synthase (1297 aa).

The interval 303 to 329 is disordered; that stretch reads ISPFPGAATGSGGEIRDEGATGRGAKP. 308–319 contacts ATP; sequence GAATGSGGEIRD. Mg(2+)-binding residues include aspartate 680, glutamate 719, asparagine 723, and aspartate 887. Serine 889 is a binding site for ATP. The 253-residue stretch at 1045 to 1297 folds into the Glutamine amidotransferase type-1 domain; the sequence is IAILREQGVN…RLFRNARMVF (253 aa). Residue cysteine 1138 is the Nucleophile of the active site. Catalysis depends on residues histidine 1263 and glutamate 1265.

It in the N-terminal section; belongs to the FGAMS family. Monomer.

Its subcellular location is the cytoplasm. It carries out the reaction N(2)-formyl-N(1)-(5-phospho-beta-D-ribosyl)glycinamide + L-glutamine + ATP + H2O = 2-formamido-N(1)-(5-O-phospho-beta-D-ribosyl)acetamidine + L-glutamate + ADP + phosphate + H(+). It functions in the pathway purine metabolism; IMP biosynthesis via de novo pathway; 5-amino-1-(5-phospho-D-ribosyl)imidazole from N(2)-formyl-N(1)-(5-phospho-D-ribosyl)glycinamide: step 1/2. Its function is as follows. Phosphoribosylformylglycinamidine synthase involved in the purines biosynthetic pathway. Catalyzes the ATP-dependent conversion of formylglycinamide ribonucleotide (FGAR) and glutamine to yield formylglycinamidine ribonucleotide (FGAM) and glutamate. In Haemophilus influenzae (strain 86-028NP), this protein is Phosphoribosylformylglycinamidine synthase.